A 575-amino-acid chain; its full sequence is Reverse gyrse subunit B (575 aa).

An RG N-terminal-type; degenerate zinc finger spans residues 1 to 39 (MKIYYNNVCPNCSGRISNERLIKGLPCENDYPYEEGTIE). ATP is bound by residues Gln83 and 100–107 (APTGMGKT). In terms of domain architecture, Helicase ATP-binding spans 87–247 (FIRAYKGYSF…KLKISGKDLE (161 aa)). A DEAD box motif is present at residues 204–207 (DDVD). One can recognise a Helicase C-terminal domain in the interval 316 to 465 (QTLELIKKLG…ALKMVEEAIE (150 aa)).

Belongs to the DEAD box helicase family. DDVD subfamily. Heterodimer of an RgyA and RgyB subunit.

Its subcellular location is the cytoplasm. It catalyses the reaction ATP + H2O = ADP + phosphate + H(+). Functionally, modifies the topological state of DNA by introducing positive supercoils in an ATP-dependent process. Binds to single-stranded DNA, transiently cleaves and then rejoins the end, introducing a positive supercoil in the process. The scissile phosphodiester is attacked by the catalytic tyrosine of the enzyme, resulting in the formation of a DNA-(5'-phosphotyrosyl)-enzyme intermediate. Probably involved in rewinding DNA strands in regions of the chromosome that have opened up to allow replication, transcription, DNA repair or for DNA protection. Reconstituted holoenzyme binds dsDNA a bit better than ssDNA, this subunit preferentially binds dsDNA. In isolation this subunit has DNA-stimulated ATPase activity that is stimulated by topoisomerase-domain containing RgyA. This subunit inhibits the relaxation activity of the topoisomerase subunit while promoting positive supercoiling. This chain is Reverse gyrse subunit B, found in Nanoarchaeum equitans (strain Kin4-M).